The chain runs to 293 residues: L-ornithine N(alpha)-acyltransferase (293 aa).

The protein belongs to the acetyltransferase family. OlsB subfamily.

It catalyses the reaction a (3R)-hydroxyacyl-[ACP] + L-ornithine = a lyso-ornithine lipid + holo-[ACP] + H(+). Its pathway is lipid metabolism. Functionally, catalyzes the first step in the biosynthesis of ornithine lipids, which are phosphorus-free membrane lipids. Catalyzes the 3-hydroxyacyl-acyl carrier protein-dependent acylation of ornithine to form lyso-ornithine lipid (LOL). The protein is L-ornithine N(alpha)-acyltransferase of Agrobacterium fabrum (strain C58 / ATCC 33970) (Agrobacterium tumefaciens (strain C58)).